We begin with the raw amino-acid sequence, 400 residues long: Imidazolonepropionase (400 aa).

The Fe(3+) site is built by H70 and H72. H70 and H72 together coordinate Zn(2+). Positions 79, 142, and 175 each coordinate 4-imidazolone-5-propanoate. Y142 provides a ligand contact to N-formimidoyl-L-glutamate. H239 contributes to the Fe(3+) binding site. Zn(2+) is bound at residue H239. Q242 contacts 4-imidazolone-5-propanoate. D314 is a binding site for Fe(3+). Zn(2+) is bound at residue D314. N-formimidoyl-L-glutamate contacts are provided by N316 and G318. T319 is a 4-imidazolone-5-propanoate binding site.

The protein belongs to the metallo-dependent hydrolases superfamily. HutI family. The cofactor is Zn(2+). Fe(3+) is required as a cofactor.

It is found in the cytoplasm. It catalyses the reaction 4-imidazolone-5-propanoate + H2O = N-formimidoyl-L-glutamate. It participates in amino-acid degradation; L-histidine degradation into L-glutamate; N-formimidoyl-L-glutamate from L-histidine: step 3/3. In terms of biological role, catalyzes the hydrolytic cleavage of the carbon-nitrogen bond in imidazolone-5-propanoate to yield N-formimidoyl-L-glutamate. It is the third step in the universal histidine degradation pathway. In Methylobacterium nodulans (strain LMG 21967 / CNCM I-2342 / ORS 2060), this protein is Imidazolonepropionase.